Consider the following 124-residue polypeptide: Flagellar transcriptional regulator FlhD (124 aa).

Belongs to the FlhD family. Homodimer; disulfide-linked. Forms a heterohexamer composed of two FlhC and four FlhD subunits. Each FlhC binds a FlhD dimer, forming a heterotrimer, and a hexamer assembles by dimerization of two heterotrimers.

It is found in the cytoplasm. Its function is as follows. Functions in complex with FlhC as a master transcriptional regulator that regulates transcription of several flagellar and non-flagellar operons by binding to their promoter region. Activates expression of class 2 flagellar genes, including fliA, which is a flagellum-specific sigma factor that turns on the class 3 genes. Also regulates genes whose products function in a variety of physiological pathways. The polypeptide is Flagellar transcriptional regulator FlhD (Pectobacterium carotovorum (Erwinia carotovora)).